The chain runs to 214 residues: Methyltransferase HEMK2 (214 aa).

Thr29, Glu51, Gly53, Asp77, Asp103, Leu104, and Asn122 together coordinate S-adenosyl-L-methionine. Asn122 is a binding site for a protein.

The protein belongs to the eukaryotic/archaeal PrmC-related family. Heterodimer; heterodimerization with TRMT112 is required for S-adenosyl-L-methionine-binding. Post-translationally, ubiquitinated, leading to its degradation by the proteasome. As to expression, highly expressed in undifferentiated embryonic stem cells (at protein level). Also expressed in testis and brain, weakly expressed in differentiated embryonic stem cells and kidney. Not expressed in muscle, heart, placenta, pancreas, lung and stomach.

It localises to the nucleus. It carries out the reaction L-lysyl-[histone] + S-adenosyl-L-methionine = N(6)-methyl-L-lysyl-[histone] + S-adenosyl-L-homocysteine + H(+). The enzyme catalyses L-glutaminyl-[protein] + S-adenosyl-L-methionine = N(5)-methyl-L-glutaminyl-[protein] + S-adenosyl-L-homocysteine + H(+). The catalysed reaction is methylarsonous acid + S-adenosyl-L-methionine = dimethylarsinate + S-adenosyl-L-homocysteine + 2 H(+). Methyltransferase that can methylate proteins and, to a lower extent, arsenic. Catalytic subunit of a heterodimer with TRMT112, which monomethylates 'Lys-12' of histone H4 (H4K12me1), a modification present at the promoters of numerous genes encoding cell cycle regulators. Catalytic subunit of a heterodimer with TRMT112, which catalyzes N5-methylation of Glu residue of proteins with a Gly-Gln-Xaa-Xaa-Xaa-Arg motif. Methylates ETF1 on 'Gln-185'; ETF1 needs to be complexed to ERF3 in its GTP-bound form to be efficiently methylated. May also play a role in the modulation of arsenic-induced toxicity by mediating the conversion of monomethylarsonous acid (3+) into the less toxic dimethylarsonic acid. It however only plays a limited role in arsenic metabolism compared with AS3MT. The protein is Methyltransferase HEMK2 of Mus musculus (Mouse).